The chain runs to 298 residues: Cyclin-C (298 aa).

The Cyclin N-terminal domain maps to 46–162; sequence NFITAVATEC…ILDCCLVVHH (117 aa). Residues 278–298 form a disordered region; sequence KLPKPNTPIPPPQQQQSSYHM.

Belongs to the cyclin family. Cyclin C subfamily. In terms of assembly, component of the Mediator complex.

The protein resides in the nucleus. Its function is as follows. Component of the Mediator complex, a coactivator involved in regulated gene transcription of nearly all RNA polymerase II-dependent genes. Mediator functions as a bridge to convey information from gene-specific regulatory proteins to the basal RNA polymerase II transcription machinery. Mediator is recruited to promoters by direct interactions with regulatory proteins and serves as a scaffold for the assembly of a functional preinitiation complex with RNA polymerase II and the general transcription factors. Binds to and activates cyclin-dependent kinase cdk-8 that phosphorylates the CTD (C-terminal domain) of the large subunit of RNA polymerase II (RNAp II), which may inhibit the formation of a transcription initiation complex. In Caenorhabditis briggsae, this protein is Cyclin-C (cic-1).